Reading from the N-terminus, the 781-residue chain is Catenin beta-1 (781 aa).

Position 2 is an N-acetylalanine (Ala2). Residues 2-23 (ATQADLMELDMAMEPDRKAAVS) form an interaction with VCL region. Phosphoserine; by GSK3-beta; alternate is present on Ser23. An O-linked (GlcNAc) serine; alternate glycan is attached at Ser23. Residue Ser29 is modified to Phosphoserine; by GSK3-beta. Phosphoserine; by GSK3-beta and HIPK2 is present on residues Ser33 and Ser37. A disordered region spans residues 34-56 (GIHSGATTTAPSLSGKGNPEEED). A Phosphothreonine; by GSK3-beta modification is found at Thr41. A Phosphoserine modification is found at Ser45. Lys49 carries the N6-acetyllysine modification. Tyr64 bears the Phosphotyrosine; by PTK6 mark. Tyr142 bears the Phosphotyrosine; by FYN and PTK6 mark. ARM repeat units lie at residues 151 to 191 (RAIP…IMRS), 193 to 234 (QMVS…IFKS), 235 to 276 (GGIP…VRLA), 277 to 318 (GGLQ…ILAS), 319 to 360 (GGPQ…IVEA), 361 to 389 (GGMQALGLHLTDPSQRLVQNCLWTLRNLS), 400 to 441 (GLLG…VCQV), 442 to 484 (GGIE…AQNA), 489 to 530 (YGLP…LREQ), 531 to 571 (GAIP…EIVE), 594 to 636 (NTIP…AEGA), and 637 to 666 (TAPLTELLHSRNEGVATYAAAVLFRMSEDK). The interaction with BCL9 stretch occupies residues 156-178 (LTKLLNDEDQVVVNKAAVMVHQL). Residue Ser191 is modified to Phosphoserine; by CDK5. Ser246 carries the phosphoserine; by CDK5 modification. Tyr331 and Tyr333 each carry phosphotyrosine. Phosphoserine; by AMPK is present on Ser552. Position 556 is a phosphothreonine (Thr556). Residue Cys619 is modified to S-nitrosocysteine. Position 675 is a phosphoserine (Ser675). The tract at residues 705 to 781 (EPLGYRQDDP…NQLAWFDTDL (77 aa)) is disordered. A compositionally biased stretch (basic and acidic residues) spans 734 to 745 (MMEHEMGGHHPG). The tract at residues 772-781 (NQLAWFDTDL) is interaction with SCRIB.

It belongs to the beta-catenin family. As to quaternary structure, two separate complex-associated pools are found in the cytoplasm. The majority is present as component of an E-cadherin/ catenin adhesion complex composed of at least E-cadherin/CDH1 and beta-catenin/CTNNB1, and possibly alpha-catenin/CTNNA1; the complex is located to adherens junctions. The stable association of CTNNA1 is controversial as CTNNA1 was shown not to bind to F-actin when assembled in the complex. Alternatively, the CTNNA1-containing complex may be linked to F-actin by other proteins such as LIMA1. Another cytoplasmic pool is part of a large complex containing AXIN1, AXIN2, APC, CSNK1A1 and GSK3B that promotes phosphorylation on N-terminal Ser and Thr residues and ubiquitination of CTNNB1 via BTRC and its subsequent degradation by the proteasome. Wnt-dependent activation of DVL antagonizes the action of GSK3B. When GSK3B activity is inhibited the complex dissociates, CTNNB1 is dephosphorylated and is no longer targeted for destruction. The stabilized protein translocates to the nucleus, where it binds TCF/LEF-1 family members, BCL9, BCL9L and possibly also RUVBL1 and CHD8. Binds CTNNBIP and EP300. CTNNB1 forms a ternary complex with LEF1 and EP300 that is disrupted by CTNNBIP1 binding. Interacts with TAX1BP3 (via the PDZ domain); this interaction inhibits the transcriptional activity of CTNNB1. Interacts with AJAP1, BAIAP1, CARM1, CTNNA3, CXADR and PCDH11Y. Binds NHERF1. Interacts with GLIS2 and SLC30A9. Interacts with XIRP1 and MUC1. Interacts with PTPRU (via the cytoplasmic juxtamembrane domain) and with EMD. Interacts with SCRIB. Interacts with TNIK. Interacts with SESTD1 and TRPC4. Interacts directly with AXIN1; the interaction is regulated by CDK2 phosphorylation of AXIN1. Interacts with CAV1. Interacts with TRPV4. The TRPV4 and CTNNB1 complex can interact with CDH1. Interacts with VCL. Interacts with PTPRJ. Interacts with PKT7. Interacts with FAT1 (via the cytoplasmic domain). Interacts with NANOS1 and NDRG2. Interacts with NEK2, CDK2 and CDK5. Interacts with PTK6. Interacts with SOX7; this interaction may lead to proteasomal degradation of active CTNNB1 and thus inhibition of Wnt/beta-catenin-stimulated transcription. Identified in a complex with HINT1 and MITF. Interacts with FHIT. The CTNNB1 and TCF4 complex interacts with PML. Interacts with FERMT2. Identified in a complex with TCF4 and FERMT2. Interacts with RORA. May interact with P-cadherin/CDH3. Interacts with RAPGEF2. Interacts with RNF220. Interacts with CTNND2. Interacts (via the C-terminal region) with CBY1. The complex composed, at least, of APC, CTNNB1 and GSK3B interacts with JPT1; the interaction requires the inactive form of GSK3B (phosphorylated at 'Ser-9'). Interacts with DLG5. Interacts with FAM53B; promoting translocation to the nucleus. Interacts with TMEM170B. Interacts with AHI1. Interacts with GID8. Component of an cadherin:catenin adhesion complex composed of at least of CDH26, beta-catenin/CTNNB1, alpha-catenin/CTNNA1 and p120 catenin/CTNND1. Forms a complex comprising APPL1, RUVBL2, APPL2, HDAC1 and HDAC2. Interacts with IRF2BPL; mediates the ubiquitination and degradation of CTNNB1. Interacts with LMBR1L and AMFR. Interacts with LMBR1L. Interacts with SOX30; prevents interaction of CTNNB1 with TCF7L2/TCF4 and leads to inhibition of Wnt signaling. Interacts with SOX9; inhibiting CTNNB1 activity by competing with the binding sites of TCF/LEF within CTNNB1, thereby inhibiting the Wnt signaling. Interacts with SPN/CD43 cytoplasmic tail. Interacts (when phosphorylated at Tyr-333) with isoform M2 of PKM (PKM2); promoting transcription activation. Interacts with PKP2 (via HEAD domain). Interacts with CDH1. Interacts (when unphosphorylated) with FLYWCH1, perhaps preventing interaction of CTNNB1 with TCF4, and thereby regulating transcription activation; phosphorylation of CTNNB1 may inhibit the interaction. Interacts (via the central armadillo domains) with probable transcriptional regulator ADNP (via N-terminal region); interaction is direct and stabilizes CTNNB1 by modulating its phosphorylation by glycogen synthase kinase-3 beta GSK3B. Interacts with NR5A2. Interacts with DSG2; the interaction promotes localization of CTNNB1 at cell junctions thus reducing its nuclear localization and subsequent transcription of CTNNB1/TCF-target genes. Post-translationally, phosphorylation by GSK3B requires prior phosphorylation of Ser-45 by another kinase. Phosphorylation proceeds then from Thr-41 to Ser-33. Phosphorylated by NEK2. EGF stimulates tyrosine phosphorylation. Phosphorylated on Ser-33 and Ser-37 by HIPK2. This phosphorylation triggers proteasomal degradation. Phosphorylation at Ser-552 by AMPK promotes stabilization of the protein, enhancing TCF/LEF-mediated transcription. Phosphorylation on Ser-191 and Ser-246 by CDK5. Phosphorylation by CDK2 regulates insulin internalization. Phosphorylation by PTK6 at Tyr-64, Tyr-142, Tyr-331 and/or Tyr-333 with the predominant site at Tyr-64 is not essential for inhibition of transcriptional activity. Phosphorylation by SRC at Tyr-333 promotes interaction with isoform M2 of PKM (PKM2); promoting transcription activation. Ubiquitinated by the SCF(BTRC) E3 ligase complex when phosphorylated by GSK3B, leading to its degradation. Ubiquitinated by a E3 ubiquitin ligase complex containing UBE2D1, SIAH1, CACYBP/SIP, SKP1, APC and TBL1X, leading to its subsequent proteasomal degradation. Ubiquitinated and degraded following interaction with SOX9. Ubiquitinated via 'Lys-11'- and 'Lys-29'-linked ubiquitin chains by UBR5, leading to its stabilization. In terms of processing, S-nitrosylation at Cys-619 within adherens junctions promotes VEGF-induced, NO-dependent endothelial cell permeability by disrupting interaction with E-cadherin, thus mediating disassembly adherens junctions. Post-translationally, O-glycosylation at Ser-23 decreases nuclear localization and transcriptional activity, and increases localization to the plasma membrane and interaction with E-cadherin CDH1. Deacetylated at Lys-49 by SIRT1.

It is found in the cytoplasm. The protein localises to the nucleus. The protein resides in the cytoskeleton. It localises to the cell junction. Its subcellular location is the adherens junction. It is found in the cell membrane. The protein localises to the microtubule organizing center. The protein resides in the centrosome. It localises to the spindle pole. Its subcellular location is the synapse. It is found in the cilium basal body. Its function is as follows. Key downstream component of the canonical Wnt signaling pathway. In the absence of Wnt, forms a complex with AXIN1, AXIN2, APC, CSNK1A1 and GSK3B that promotes phosphorylation on N-terminal Ser and Thr residues and ubiquitination of CTNNB1 via BTRC and its subsequent degradation by the proteasome. In the presence of Wnt ligand, CTNNB1 is not ubiquitinated and accumulates in the nucleus, where it acts as a coactivator for transcription factors of the TCF/LEF family, leading to activate Wnt responsive genes. Also acts as a coactivator for other transcription factors, such as NR5A2. Promotes epithelial to mesenchymal transition/mesenchymal to epithelial transition (EMT/MET) via driving transcription of CTNNB1/TCF-target genes. Involved in the regulation of cell adhesion, as component of an E-cadherin:catenin adhesion complex. Acts as a negative regulator of centrosome cohesion. Involved in the CDK2/PTPN6/CTNNB1/CEACAM1 pathway of insulin internalization. Blocks anoikis of malignant kidney and intestinal epithelial cells and promotes their anchorage-independent growth by down-regulating DAPK2. Disrupts PML function and PML-NB formation by inhibiting RANBP2-mediated sumoylation of PML. Promotes neurogenesis by maintaining sympathetic neuroblasts within the cell cycle. Involved in chondrocyte differentiation via interaction with SOX9: SOX9-binding competes with the binding sites of TCF/LEF within CTNNB1, thereby inhibiting the Wnt signaling. Acts as a positive regulator of odontoblast differentiation during mesenchymal tooth germ formation, via promoting the transcription of differentiation factors such as LEF1, BMP2 and BMP4. Activity is repressed in a MSX1-mediated manner at the bell stage of mesenchymal tooth germ formation which prevents premature differentiation of odontoblasts. The chain is Catenin beta-1 from Bos taurus (Bovine).